The primary structure comprises 433 residues: Dihydroorotase (433 aa).

Residues H63 and H65 each coordinate Zn(2+). Residues 65–67 (HLR) and N97 contribute to the substrate site. D155, H182, and H235 together coordinate Zn(2+). Substrate is bound at residue N283. D310 provides a ligand contact to Zn(2+). D310 is a catalytic residue. Residue H314 coordinates substrate.

It belongs to the metallo-dependent hydrolases superfamily. DHOase family. Class I DHOase subfamily. Zn(2+) serves as cofactor.

The enzyme catalyses (S)-dihydroorotate + H2O = N-carbamoyl-L-aspartate + H(+). Its pathway is pyrimidine metabolism; UMP biosynthesis via de novo pathway; (S)-dihydroorotate from bicarbonate: step 3/3. Functionally, catalyzes the reversible cyclization of carbamoyl aspartate to dihydroorotate. The chain is Dihydroorotase from Anaeromyxobacter dehalogenans (strain 2CP-C).